A 499-amino-acid polypeptide reads, in one-letter code: Maturase K (499 aa).

It belongs to the intron maturase 2 family. MatK subfamily.

The protein localises to the plastid. It localises to the chloroplast. Functionally, usually encoded in the trnK tRNA gene intron. Probably assists in splicing its own and other chloroplast group II introns. In Chamaecrista fasciculata (Showy partridge pea), this protein is Maturase K.